Here is a 496-residue protein sequence, read N- to C-terminus: MAATGVLAEIIDGDVYKYYADGEWKKSTSGKSVAIINPTTRKPQYKVQACSQEEVNKVMDSAKSAQKSWAKTPLWKRAELLHKAAAILKEHKAAIAECLVKEIAKPAKDAVTEVVRSGDLVSYCAEEGVRILGEGKFLVSDSFPGNERTKYCLTSKIPLGVILAIPPFNYPVNLAVSKIAPALIAGNSIVLKPPTQGAVAALHMVHCFHLAGFPKGLISCVTGKGSEIGDFLTMHPGVNCISFTGGDTGIAISKKSGMIPLQMELGGKDACIVLEDADLDLVAANIIKGGFSYSGQRCTAVKVVLVMESVADALVEKVKVKVAKLSVGPPEDDSDITPVVSESSANFIEGLVNDAKEKGATFCQEYKREGNLIWPLLLDNVRPDMRIAWEEPFGPVLPVIRINSVEEGIHHCNASNFGLQGCVFTKDINKAIMISDAMESGTVQINSAPARGPDHFPFQGIKDSGIGSQGITNSINMMTKVKTTVINLPSPSYTMG.

Substrate is bound by residues Arg116 and 169-170 (NY). The NADP(+) site is built by Lys192, Thr195, and Asp230. 245 to 249 (GGDTG) contributes to the NAD(+) binding site. Glu264 (proton acceptor) is an active-site residue. 297-299 (RCT) is a substrate binding site. Residue Cys298 is the Nucleophile of the active site. Glu391 serves as a coordination point for NADP(+). Arg451 is a binding site for substrate.

It belongs to the aldehyde dehydrogenase family.

The protein resides in the cytoplasm. The enzyme catalyses D-glyceraldehyde 3-phosphate + NADP(+) + H2O = (2R)-3-phosphoglycerate + NADPH + 2 H(+). Functionally, important as a means of generating NADPH for biosynthetic reactions. This is NADP-dependent glyceraldehyde-3-phosphate dehydrogenase (GAPN) from Pisum sativum (Garden pea).